The sequence spans 332 residues: Small ribosomal subunit protein uS2 (332 aa).

The protein belongs to the universal ribosomal protein uS2 family.

The sequence is that of Small ribosomal subunit protein uS2 from Afipia carboxidovorans (strain ATCC 49405 / DSM 1227 / KCTC 32145 / OM5) (Oligotropha carboxidovorans).